The following is a 192-amino-acid chain: Imidazoleglycerol-phosphate dehydratase (192 aa).

The protein belongs to the imidazoleglycerol-phosphate dehydratase family.

It is found in the cytoplasm. The catalysed reaction is D-erythro-1-(imidazol-4-yl)glycerol 3-phosphate = 3-(imidazol-4-yl)-2-oxopropyl phosphate + H2O. It functions in the pathway amino-acid biosynthesis; L-histidine biosynthesis; L-histidine from 5-phospho-alpha-D-ribose 1-diphosphate: step 6/9. The chain is Imidazoleglycerol-phosphate dehydratase from Methanocella arvoryzae (strain DSM 22066 / NBRC 105507 / MRE50).